Reading from the N-terminus, the 258-residue chain is Snake venom serine proteinase 8 (258 aa).

An N-terminal signal peptide occupies residues 1–18 (MVLIRVLANLLILQLSYA). The propeptide occupies 19–24 (QKSSEL). Positions 25–249 (VIGGDECNIN…YNDWIQSIIA (225 aa)) constitute a Peptidase S1 domain. Cystine bridges form between Cys31/Cys163, Cys50/Cys66, Cys98/Cys256, Cys142/Cys210, Cys174/Cys189, and Cys200/Cys225. Residue Asn44 is glycosylated (N-linked (GlcNAc...) asparagine). Residues His65 and Asp110 each act as charge relay system in the active site. Residue Ser204 is the Charge relay system of the active site.

This sequence belongs to the peptidase S1 family. Snake venom subfamily. Monomer. As to expression, expressed by the venom gland.

The protein resides in the secreted. Its function is as follows. Snake venom serine protease that may act in the hemostasis system of the prey. The polypeptide is Snake venom serine proteinase 8 (Crotalus adamanteus (Eastern diamondback rattlesnake)).